A 509-amino-acid chain; its full sequence is Transmembrane protein 102 (509 aa).

At methionine 1–arginine 312 the chain is on the extracellular side. The interval proline 167–threonine 236 is disordered. Over residues aspartate 174–proline 204 the composition is skewed to basic and acidic residues. The segment covering serine 207 to aspartate 224 has biased composition (low complexity). Residues histidine 313–proline 329 form a helical membrane-spanning segment. Over aspartate 330–histidine 509 the chain is Cytoplasmic.

In terms of assembly, interacts with CSF2RB; this interaction occurs preferentially in the absence of CSF2.

The protein localises to the cell membrane. Its function is as follows. Selectively involved in CSF2 deprivation-induced apoptosis via a mitochondria-dependent pathway. The protein is Transmembrane protein 102 (Tmem102) of Mus musculus (Mouse).